The sequence spans 276 residues: Large ribosomal subunit protein uL2 (276 aa).

A disordered region spans residues 211 to 276 (RNRHRGIRPQ…KLIISRRKGK (66 aa)). Over residues 230 to 240 (DHPHGGGEGKK) the composition is skewed to basic and acidic residues.

It belongs to the universal ribosomal protein uL2 family. Part of the 50S ribosomal subunit. Forms a bridge to the 30S subunit in the 70S ribosome.

One of the primary rRNA binding proteins. Required for association of the 30S and 50S subunits to form the 70S ribosome, for tRNA binding and peptide bond formation. It has been suggested to have peptidyltransferase activity; this is somewhat controversial. Makes several contacts with the 16S rRNA in the 70S ribosome. The protein is Large ribosomal subunit protein uL2 of Campylobacter jejuni subsp. doylei (strain ATCC BAA-1458 / RM4099 / 269.97).